Reading from the N-terminus, the 404-residue chain is Formate-dependent phosphoribosylglycinamide formyltransferase (404 aa).

N(1)-(5-phospho-beta-D-ribosyl)glycinamide is bound by residues 25–26 (EL) and Glu-85. ATP-binding positions include Arg-118, Lys-159, 164-169 (SSGKGQ), 199-202 (EGFI), and Glu-207. Residues 123–318 (RLAAEELGLP…EFELHARAIL (196 aa)) form the ATP-grasp domain. Mg(2+) is bound by residues Glu-277 and Glu-289. Residues Asp-296, Lys-365, and 372–373 (RR) each bind N(1)-(5-phospho-beta-D-ribosyl)glycinamide.

Belongs to the PurK/PurT family. Homodimer.

It catalyses the reaction N(1)-(5-phospho-beta-D-ribosyl)glycinamide + formate + ATP = N(2)-formyl-N(1)-(5-phospho-beta-D-ribosyl)glycinamide + ADP + phosphate + H(+). Its pathway is purine metabolism; IMP biosynthesis via de novo pathway; N(2)-formyl-N(1)-(5-phospho-D-ribosyl)glycinamide from N(1)-(5-phospho-D-ribosyl)glycinamide (formate route): step 1/1. Involved in the de novo purine biosynthesis. Catalyzes the transfer of formate to 5-phospho-ribosyl-glycinamide (GAR), producing 5-phospho-ribosyl-N-formylglycinamide (FGAR). Formate is provided by PurU via hydrolysis of 10-formyl-tetrahydrofolate. This chain is Formate-dependent phosphoribosylglycinamide formyltransferase, found in Burkholderia mallei (strain NCTC 10247).